We begin with the raw amino-acid sequence, 511 residues long: ATP synthase subunit alpha 1 (511 aa).

174 to 181 serves as a coordination point for ATP; it reads GDRQTGKT.

It belongs to the ATPase alpha/beta chains family. As to quaternary structure, F-type ATPases have 2 components, CF(1) - the catalytic core - and CF(0) - the membrane proton channel. CF(1) has five subunits: alpha(3), beta(3), gamma(1), delta(1), epsilon(1). CF(0) has four main subunits: a(1), b(1), b'(1) and c(9-12).

Its subcellular location is the cell inner membrane. The enzyme catalyses ATP + H2O + 4 H(+)(in) = ADP + phosphate + 5 H(+)(out). Produces ATP from ADP in the presence of a proton gradient across the membrane. The alpha chain is a regulatory subunit. In Chlorobium luteolum (strain DSM 273 / BCRC 81028 / 2530) (Pelodictyon luteolum), this protein is ATP synthase subunit alpha 1.